Consider the following 285-residue polypeptide: Putative sugar uptake protein lp_2503 (285 aa).

The next 9 helical transmembrane spans lie at 2 to 21, 31 to 48, 55 to 72, 112 to 134, 147 to 169, 179 to 196, 209 to 228, 233 to 255, and 264 to 283; these read GILIALIPAIAWGSIGLISG, TLGMTMGALVFGLALWAV, SKIWLIGIVSGLFWSIGQ, GNMYWIGSASVIVLIAGAVLTSL, NWGVGIRALILSTIGYAGYTIVV, VVMPQAVGMLLGALIWSF, NIVTGLVWGIGNLFMFMAMA, AVAYSLSQMGIVISTFGSIYLLG, and VYVVIGSILVIVGGVALSLM.

Belongs to the GRP transporter (TC 2.A.7.5) family.

Its subcellular location is the cell membrane. The polypeptide is Putative sugar uptake protein lp_2503 (Lactiplantibacillus plantarum (strain ATCC BAA-793 / NCIMB 8826 / WCFS1) (Lactobacillus plantarum)).